The sequence spans 528 residues: Propionate catabolism operon regulatory protein (528 aa).

Positions 218–461 (MLGQSPQMEQ…RNMMERLALF (244 aa)) constitute a Sigma-54 factor interaction domain. 318-327 (AHGGTLFLDE) contacts ATP. Positions 508-527 (KTAAANYLGISRTTFWRRLK) form a DNA-binding region, H-T-H motif.

In terms of biological role, involved in the transcriptional regulation of the propionate catabolism operon. This chain is Propionate catabolism operon regulatory protein (prpR), found in Escherichia coli (strain K12).